Reading from the N-terminus, the 426-residue chain is D-tagatose-1,6-bisphosphate aldolase subunit KbaZ (426 aa).

Belongs to the GatZ/KbaZ family. KbaZ subfamily. Forms a complex with KbaY.

The protein operates within carbohydrate metabolism; D-tagatose 6-phosphate degradation; D-glyceraldehyde 3-phosphate and glycerone phosphate from D-tagatose 6-phosphate: step 2/2. Component of the tagatose-1,6-bisphosphate aldolase KbaYZ that is required for full activity and stability of the Y subunit. Could have a chaperone-like function for the proper and stable folding of KbaY. When expressed alone, KbaZ does not show any aldolase activity. The protein is D-tagatose-1,6-bisphosphate aldolase subunit KbaZ of Escherichia coli O81 (strain ED1a).